A 70-amino-acid polypeptide reads, in one-letter code: Small ribosomal subunit protein bS21 (70 aa).

This sequence belongs to the bacterial ribosomal protein bS21 family.

In Herminiimonas arsenicoxydans, this protein is Small ribosomal subunit protein bS21.